We begin with the raw amino-acid sequence, 165 residues long: Peptidyl-prolyl cis-trans isomerase A (165 aa).

At Met-1 the chain carries N-acetylmethionine. Val-2 is modified (N-acetylvaline; in Peptidyl-prolyl cis-trans isomerase A, N-terminally processed). The PPIase cyclophilin-type domain occupies 7 to 163 (FFDIAVDGEP…KKITIADCGQ (157 aa)). Position 28 is an N6-acetyllysine; alternate (Lys-28). Lys-28 is covalently cross-linked (Glycyl lysine isopeptide (Lys-Gly) (interchain with G-Cter in SUMO2); alternate). Residue Lys-28 forms a Glycyl lysine isopeptide (Lys-Gly) (interchain with G-Cter in ubiquitin); alternate linkage. An N6-acetyllysine mark is found at Lys-44 and Lys-76. Position 77 is a phosphoserine (Ser-77). Lys-82 carries the post-translational modification N6-acetyllysine; alternate. A Glycyl lysine isopeptide (Lys-Gly) (interchain with G-Cter in SUMO2); alternate cross-link involves residue Lys-82. Thr-93 is subject to Phosphothreonine. The N-linked (GlcNAc...) asparagine glycan is linked to Asn-108. 3 positions are modified to N6-acetyllysine: Lys-125, Lys-131, and Lys-133.

Belongs to the cyclophilin-type PPIase family. PPIase A subfamily. Interacts with protein phosphatase PPP3CA/calcineurin A. Interacts with isoform 2 of BSG/CD147. Interacts with FOXO1; the interaction promotes FOXO1 dephosphorylation, nuclear accumulation and transcriptional activity. Interacts with integrin ITGA2B:ITGB3; the interaction is ROS and peptidyl-prolyl cis-trans isomerase (PPIase) activity-dependent and is increased in the presence of thrombin. Interacts with MAP3K5. Interacts with TARDBP; the interaction is dependent on the RNA-binding activity of TARDBP and the PPIase activity of PPIA/CYPA and the acetylation of PPIA/CYPA at Lys-125 favors the interaction. Interacts with HNRNPA1, HNRNPA2B1, HNRNPC, RBMX, HNRNPK and HNRNPM. In terms of processing, acetylation at Lys-125 markedly inhibits catalysis of cis to trans isomerization. PPIA acetylation also antagonizes the immunosuppressive effects of cyclosporine by inhibiting the sequential steps of cyclosporine binding and calcineurin inhibition. Acetylation at Lys-125 favors the interaction with TARDBP.

Its subcellular location is the cytoplasm. The protein resides in the secreted. It is found in the nucleus. The enzyme catalyses [protein]-peptidylproline (omega=180) = [protein]-peptidylproline (omega=0). Its activity is regulated as follows. Binds cyclosporin A (CsA). CsA mediates some of its effects via an inhibitory action on PPIase. In terms of biological role, catalyzes the cis-trans isomerization of proline imidic peptide bonds in oligopeptides. Exerts a strong chemotactic effect on leukocytes partly through activation of one of its membrane receptors BSG/CD147, initiating a signaling cascade that culminates in MAPK/ERK activation. Activates endothelial cells (ECs) in a proinflammatory manner by stimulating activation of NF-kappa-B and ERK, JNK and p38 MAP-kinases and by inducing expression of adhesion molecules including SELE and VCAM1. Induces apoptosis in ECs by promoting the FOXO1-dependent expression of CCL2 and BCL2L11 which are involved in EC chemotaxis and apoptosis. In response to oxidative stress, initiates proapoptotic and antiapoptotic signaling in ECs via activation of NF-kappa-B and AKT1 and up-regulation of antiapoptotic protein BCL2. Negatively regulates MAP3K5/ASK1 kinase activity, autophosphorylation and oxidative stress-induced apoptosis mediated by MAP3K5/ASK1. Necessary for the assembly of TARDBP in heterogeneous nuclear ribonucleoprotein (hnRNP) complexes and regulates TARDBP binding to RNA UG repeats and TARDBP-dependent expression of HDAC6, ATG7 and VCP which are involved in clearance of protein aggregates. Plays an important role in platelet activation and aggregation. Regulates calcium mobilization and integrin ITGA2B:ITGB3 bidirectional signaling via increased ROS production as well as by facilitating the interaction between integrin and the cell cytoskeleton. Binds heparan sulfate glycosaminoglycans. In Symphalangus syndactylus (Siamang), this protein is Peptidyl-prolyl cis-trans isomerase A (PPIA).